A 428-amino-acid chain; its full sequence is Light-independent protochlorophyllide reductase subunit N (428 aa).

Residues Cys-29, Cys-54, and Cys-115 each coordinate [4Fe-4S] cluster.

It belongs to the BchN/ChlN family. Protochlorophyllide reductase is composed of three subunits; BchL, BchN and BchB. Forms a heterotetramer of two BchB and two BchN subunits. [4Fe-4S] cluster serves as cofactor.

The enzyme catalyses chlorophyllide a + oxidized 2[4Fe-4S]-[ferredoxin] + 2 ADP + 2 phosphate = protochlorophyllide a + reduced 2[4Fe-4S]-[ferredoxin] + 2 ATP + 2 H2O. The protein operates within porphyrin-containing compound metabolism; bacteriochlorophyll biosynthesis (light-independent). Its function is as follows. Component of the dark-operative protochlorophyllide reductase (DPOR) that uses Mg-ATP and reduced ferredoxin to reduce ring D of protochlorophyllide (Pchlide) to form chlorophyllide a (Chlide). This reaction is light-independent. The NB-protein (BchN-BchB) is the catalytic component of the complex. The protein is Light-independent protochlorophyllide reductase subunit N of Roseobacter denitrificans (strain ATCC 33942 / OCh 114) (Erythrobacter sp. (strain OCh 114)).